A 603-amino-acid polypeptide reads, in one-letter code: Aspartate--tRNA(Asp/Asn) ligase (603 aa).

An L-aspartate-binding site is contributed by E172. The aspartate stretch occupies residues 196–199; the sequence is QLFK. Position 218 (R218) interacts with L-aspartate. ATP is bound by residues 218–220 and Q227; that span reads RDE. H457 lines the L-aspartate pocket. E491 is a binding site for ATP. Residue R498 participates in L-aspartate binding. 543–546 serves as a coordination point for ATP; the sequence is GLDR.

Belongs to the class-II aminoacyl-tRNA synthetase family. Type 1 subfamily. As to quaternary structure, homodimer.

It is found in the cytoplasm. It catalyses the reaction tRNA(Asx) + L-aspartate + ATP = L-aspartyl-tRNA(Asx) + AMP + diphosphate. Functionally, aspartyl-tRNA synthetase with relaxed tRNA specificity since it is able to aspartylate not only its cognate tRNA(Asp) but also tRNA(Asn). Reaction proceeds in two steps: L-aspartate is first activated by ATP to form Asp-AMP and then transferred to the acceptor end of tRNA(Asp/Asn). The sequence is that of Aspartate--tRNA(Asp/Asn) ligase from Laribacter hongkongensis (strain HLHK9).